Here is a 331-residue protein sequence, read N- to C-terminus: Pantothenate kinase (331 aa).

An ATP-binding site is contributed by 109–116 (GSVAVGKS).

The protein belongs to the prokaryotic pantothenate kinase family.

The protein resides in the cytoplasm. The catalysed reaction is (R)-pantothenate + ATP = (R)-4'-phosphopantothenate + ADP + H(+). It functions in the pathway cofactor biosynthesis; coenzyme A biosynthesis; CoA from (R)-pantothenate: step 1/5. In Sinorhizobium fredii (strain NBRC 101917 / NGR234), this protein is Pantothenate kinase.